The sequence spans 476 residues: Bifunctional protein HldE (476 aa).

Residues 1–319 are ribokinase; sequence MKVTLPAFEK…EALKSHQGES (319 aa). 195 to 198 is a binding site for ATP; that stretch reads NMSE. Aspartate 264 is a catalytic residue. The cytidylyltransferase stretch occupies residues 345–476; sequence MTNGCFDILH…AIIQNIMSRH (132 aa).

It in the N-terminal section; belongs to the carbohydrate kinase PfkB family. This sequence in the C-terminal section; belongs to the cytidylyltransferase family. In terms of assembly, homodimer.

It carries out the reaction D-glycero-beta-D-manno-heptose 7-phosphate + ATP = D-glycero-beta-D-manno-heptose 1,7-bisphosphate + ADP + H(+). It catalyses the reaction D-glycero-beta-D-manno-heptose 1-phosphate + ATP + H(+) = ADP-D-glycero-beta-D-manno-heptose + diphosphate. It functions in the pathway nucleotide-sugar biosynthesis; ADP-L-glycero-beta-D-manno-heptose biosynthesis; ADP-L-glycero-beta-D-manno-heptose from D-glycero-beta-D-manno-heptose 7-phosphate: step 1/4. It participates in nucleotide-sugar biosynthesis; ADP-L-glycero-beta-D-manno-heptose biosynthesis; ADP-L-glycero-beta-D-manno-heptose from D-glycero-beta-D-manno-heptose 7-phosphate: step 3/4. Catalyzes the phosphorylation of D-glycero-D-manno-heptose 7-phosphate at the C-1 position to selectively form D-glycero-beta-D-manno-heptose-1,7-bisphosphate. Its function is as follows. Catalyzes the ADP transfer from ATP to D-glycero-beta-D-manno-heptose 1-phosphate, yielding ADP-D-glycero-beta-D-manno-heptose. In Shewanella amazonensis (strain ATCC BAA-1098 / SB2B), this protein is Bifunctional protein HldE.